A 1707-amino-acid polypeptide reads, in one-letter code: Histone-lysine N-methyltransferase SETD1A (1707 aa).

Residues 60 to 89 (LQDPRCHVRSKNRDFSLPVPKFKLDEFYIG) are interaction with WDR82. Residues 84-172 (DEFYIGQIPL…NIIHAQLDIK (89 aa)) enclose the RRM domain. Disordered regions lie at residues 194 to 308 (PTGG…YQDA), 331 to 363 (TAATASSSASSSSLSSSSSSSSSSSSSQFRSSD), 381 to 486 (SYPP…AQHS), 506 to 655 (LASD…PPPH), 834 to 854 (AKPFQNAAKQQAKEEDKEKTK), 891 to 1251 (PSFK…GTEV), and 1264 to 1293 (ARRGLPALPAVEDSEATETSDEAERPRPLL). Polar residues predominate over residues 239–277 (NGTPCSQDTSFSSSRQDTPSSFGQFTPQSSQGTPYTSRG). 2 stretches are compositionally biased toward low complexity: residues 278 to 295 (STPYSQDSAYSSSTTSTS) and 331 to 357 (TAATASSSASSSSLSSSSSSSSSSSSS). The span at 430–440 (SEAPPPEPPEP) shows a compositional bias: pro residues. Ser-459 and Ser-464 each carry phosphoserine. Residues 459–473 (SPRPASPARSGSPAP) are compositionally biased toward low complexity. Residues 474–486 (ETTNESVPFAQHS) show a composition bias toward polar residues. A phosphoserine mark is found at Ser-508 and Ser-565. Residues 568–578 (ANGQNQASPCS) show a composition bias toward polar residues. Composition is skewed to pro residues over residues 593 to 617 (SPPPAPTPPQQPPPPPPPPPPPPPY) and 624 to 655 (GYPPHQPAYLLPPRPDGPPPPEYPPPPPPPPH). Over residues 844–854 (QAKEEDKEKTK) the composition is skewed to basic and acidic residues. Ser-915 carries the phosphoserine modification. Composition is skewed to acidic residues over residues 918 to 927 (AEEDEDDPEQ) and 976 to 992 (KDEEDDEEDEEDEDREE). Positions 993 to 1002 (AVDTTKKETE) are enriched in basic and acidic residues. The span at 1003-1012 (VSDGEDEESD) shows a compositional bias: acidic residues. Residues 1032-1060 (DSESSSSSSSSSSSSSSSSSSSSSSSSES) show a composition bias toward low complexity. Positions 1077 to 1094 (ASPPPREVPVPTPAPVEV) are enriched in pro residues. Ser-1103 bears the Phosphoserine mark. Positions 1127–1145 (PSAPLRPPEPPAGPPAPAP) are enriched in pro residues. The segment covering 1275–1284 (EDSEATETSD) has biased composition (acidic residues). The HCFC1-binding motif (HBM) motif lies at 1299 to 1303 (EHNYA). Disordered stretches follow at residues 1307-1417 (KPTP…AYEP) and 1472-1499 (NLTTPKRKRRPQDGPREHQTGSARSEGY). Over residues 1308 to 1323 (PTPPAPALRPPEPVPA) the composition is skewed to pro residues. Over residues 1360–1377 (EGEEEGEEEGEEEEEESS) the composition is skewed to acidic residues. A compositionally biased stretch (basic residues) spans 1390 to 1403 (RRRSLRSHARRRRP). A compositionally biased stretch (pro residues) spans 1404 to 1414 (PPPPPPPPPRA). The interval 1415-1450 (YEPRSEFEQMTILYDIWNSGLDSEDMSYLRLTYERL) is interaction with CFP1. The tract at residues 1450–1537 (LLQQTSGADW…GTNRVLSERR (88 aa)) is interaction with ASH2L, RBBP5 and WDR5. A WDR5 interaction motif (WIN) motif is present at residues 1492–1497 (GSARSE). The RxxxRR motif signature appears at 1537–1542 (RSEQRR). An SET domain is found at 1568–1685 (KKLRFGRSRI…VDEEITYDYK (118 aa)). Tyr-1684 lines the S-adenosyl-L-methionine pocket. Residues 1691–1707 (NKIPCLCGTESCRGSLN) form the Post-SET domain.

Belongs to the class V-like SAM-binding methyltransferase superfamily. Component of the SET1A/COMPASS complex composed of the catalytic subunit SETD1A, WDR5, WDR82, RBBP5, ASH2L/ASH2, CXXC1/CFP1, HCFC1 and DPY30 homotrimer. Forms a core complex with the evolutionary conserved subcomplex WRAD composed of WDR5, RBBP5, ASH2L/ASH2 and DPY30 subunits; WRAD differentially stimulates the methyltransferase activity. Interacts with BOD1L1 (via COMPASS-Shg1 domain) at replication forks. Interacts with HCFC1. Interacts with ASH2/ASH2L. Interacts with CXXC1/CFP1. Interacts with RBBP5. Interacts (via N-terminal region) with WDR82; the interaction is direct. Interacts (via the RRM domain) with hyperphosphorylated C-terminal domain (CTD) of RNA polymerase II large subunit (POLR2A) only in the presence of WDR82. Binds specifically to CTD heptad repeats phosphorylated on 'Ser-5' of each heptad. Interacts with ZNF335. Interacts with SUPT6H. Interacts with NAP1L1. Interacts (via WIN motif) with WDR5.

The protein resides in the nucleus speckle. It is found in the chromosome. Its subcellular location is the cytoplasm. The catalysed reaction is L-lysyl(4)-[histone H3] + S-adenosyl-L-methionine = N(6)-methyl-L-lysyl(4)-[histone H3] + S-adenosyl-L-homocysteine + H(+). It catalyses the reaction N(6)-methyl-L-lysyl(4)-[histone H3] + S-adenosyl-L-methionine = N(6),N(6)-dimethyl-L-lysyl(4)-[histone H3] + S-adenosyl-L-homocysteine + H(+). The enzyme catalyses N(6),N(6)-dimethyl-L-lysyl(4)-[histone H3] + S-adenosyl-L-methionine = N(6),N(6),N(6)-trimethyl-L-lysyl(4)-[histone H3] + S-adenosyl-L-homocysteine + H(+). Histone methyltransferase that catalyzes methyl group transfer from S-adenosyl-L-methionine to the epsilon-amino group of 'Lys-4' of histone H3 (H3K4) via a non-processive mechanism. Part of chromatin remodeling machinery, forms H3K4me1, H3K4me2 and H3K4me3 methylation marks at active chromatin sites where transcription and DNA repair take place. Responsible for H3K4me3 enriched promoters and transcriptional programming of inner mass stem cells and neuron progenitors during embryogenesis. Required for H3K4me1 mark at stalled replication forks. Mediates FANCD2-dependent nucleosome remodeling and RAD51 nucleofilaments stabilization at reversed forks, protecting them from nucleolytic degradation. Does not methylate 'Lys-4' of histone H3 if the neighboring 'Lys-9' residue is already methylated. Binds RNAs involved in RNA processing and the DNA damage response. The protein is Histone-lysine N-methyltransferase SETD1A (SETD1A) of Homo sapiens (Human).